We begin with the raw amino-acid sequence, 404 residues long: Advanced glycosylation end product-specific receptor (404 aa).

Positions 1-22 (MAAGTAVGAWVLVLSLWGAVVG) are cleaved as a signal peptide. Residues 23–116 (AQNITARIGE…KETKSNYRVR (94 aa)) enclose the Ig-like V-type domain. At 23–342 (AQNITARIGE…VGGSGLGTLA (320 aa)) the chain is on the extracellular side. Residues asparagine 25 and asparagine 81 are each glycosylated (N-linked (GlcNAc...) asparagine). 2 disulfide bridges follow: cysteine 38-cysteine 99 and cysteine 144-cysteine 208. Ig-like C2-type domains lie at 124-221 (PEIV…RALR) and 227-317 (PRVW…RAVS). The chain crosses the membrane as a helical span at residues 343 to 363 (LALGILGGLGTAALLIGVILW). The Cytoplasmic segment spans residues 364–404 (QRRQRRGEERKAPENQEEEEERAELNQSEEPEAGESSTGGP). The tract at residues 367–404 (QRRGEERKAPENQEEEEERAELNQSEEPEAGESSTGGP) is disordered. Over residues 378 to 396 (NQEEEEERAELNQSEEPEA) the composition is skewed to acidic residues. Residue serine 391 is modified to Phosphoserine; by PKC/PRKCZ and ATM.

As to quaternary structure, constitutive homodimer; disulfide-linked. Forms homooligomers. Interacts with S100A1 and APP. Interacts with S100B, S100A12 and S100A14. Interacts with TIRAP. Interacts with HMGB1. Interacts with LGP2; this interaction plays an important role in AGER-mediated pro-inflammatory responses and cytokine release. Interacts with double-strand break repair protein MRE11 which is a core component of the MRN complex. The interaction enhances MRE11 endonuclease activity and promotes DNA repair. Interacts with the MCM2-7 complex via interaction with complex member MCM2; the interaction is increased following DNA replication stress and stabilizes the MCM2-7 complex at replication forks. Interacts with longistatin, a protein from the saliva of the tick, Haemaphysalis longicornis; the interaction attenuates AGER-mediated production of reactive oxygen species (ROS), activation of NF-kappa-B and expression of adhesion molecules and cytokines in human endothelial cells. Post-translationally, phosphorylated on its cytoplasmic domain by PKCzeta/PRKCZ upon ligand binding. Phosphorylated by ATM following DNA damage. In terms of processing, targeted by the ubiquitin E3 ligase subunit FBXO10 to mediate its ubiquitination and degradation. Endothelial cells. Increased expression in pre-term labor and preeclampsia placentas compared to controls.

The protein resides in the cell membrane. Its subcellular location is the cell projection. It is found in the phagocytic cup. The protein localises to the early endosome. It localises to the nucleus. The protein resides in the secreted. Its function is as follows. Cell surface pattern recognition receptor that senses endogenous stress signals with a broad ligand repertoire including advanced glycation end products, S100 proteins, high-mobility group box 1 protein/HMGB1, amyloid beta/APP oligomers, nucleic acids, histones, phospholipids and glycosaminoglycans. Advanced glycosylation end products are nonenzymatically glycosylated proteins which accumulate in vascular tissue in aging and at an accelerated rate in diabetes. These ligands accumulate at inflammatory sites during the pathogenesis of various diseases including diabetes, vascular complications, neurodegenerative disorders and cancers, and RAGE transduces their binding into pro-inflammatory responses. Upon ligand binding, uses TIRAP and MYD88 as adapters to transduce the signal ultimately leading to the induction of inflammatory cytokines IL6, IL8 and TNFalpha through activation of NF-kappa-B. Interaction with S100A12 on endothelium, mononuclear phagocytes, and lymphocytes triggers cellular activation, with generation of key pro-inflammatory mediators. Interaction with S100B after myocardial infarction may play a role in myocyte apoptosis by activating ERK1/2 and p53/TP53 signaling. Contributes to the translocation of amyloid-beta peptide (ABPP) across the cell membrane from the extracellular to the intracellular space in cortical neurons. ABPP-initiated RAGE signaling, especially stimulation of p38 mitogen-activated protein kinase (MAPK), has the capacity to drive a transport system delivering ABPP as a complex with RAGE to the intraneuronal space. Participates in endothelial albumin transcytosis together with HMGB1 through the RAGE/SRC/Caveolin-1 pathway, leading to endothelial hyperpermeability. Mediates the loading of HMGB1 in extracellular vesicles (EVs) that shuttle HMGB1 to hepatocytes by transferrin-mediated endocytosis and subsequently promote hepatocyte pyroptosis by activating the NLRP3 inflammasome. Binds to DNA and promotes extracellular hypomethylated DNA (CpG DNA) uptake by cells via the endosomal route to activate inflammatory responses. Mediates phagocytosis by non-professional phagocytes (NPP) and this is enhanced by binding to ligands including RNA, DNA, HMGB1 and histones. Promotes NPP-mediated phagocytosis of Saccharomyces cerevisiae spores by binding to RNA attached to the spore wall. Also promotes NPP-mediated phagocytosis of apoptotic cells. Following DNA damage, recruited to DNA double-strand break sites where it colocalizes with the MRN repair complex via interaction with double-strand break repair protein MRE11. Enhances the endonuclease activity of MRE11, promoting the end resection of damaged DNA. Promotes DNA damage repair in trophoblasts which enhances trophoblast invasion and contributes to placental development and maintenance. Protects cells from DNA replication stress by localizing to damaged replication forks where it stabilizes the MCM2-7 complex and promotes faithful progression of the replication fork. Mediates the production of reactive oxygen species (ROS) in human endothelial cells. The polypeptide is Advanced glycosylation end product-specific receptor (AGER) (Homo sapiens (Human)).